The primary structure comprises 466 residues: 5-hydroxytryptamine receptor (466 aa).

Residues 1–21 form a disordered region; sequence MNASRLPGFNDTSQDQPYPTS. Over 1 to 66 the chain is Extracellular; sequence MNASRLPGFN…TSFVLMAVTS (66 aa). Residues Asn2, Asn10, Asn29, Asn41, Asn45, and Asn50 are each glycosylated (N-linked (GlcNAc...) asparagine). Residues 10 to 21 are compositionally biased toward polar residues; it reads NDTSQDQPYPTS. Residues 67 to 89 traverse the membrane as a helical segment; it reads VVLALIILATIVGNVFVIAAIII. The Cytoplasmic portion of the chain corresponds to 90-99; the sequence is ERNLQNVANY. Residues 100 to 121 traverse the membrane as a helical segment; that stretch reads LVASLAVADLMVACLVMPLGAV. At 122–136 the chain is on the extracellular side; that stretch reads YEVSQGWILGPELCD. Cys135 and Cys215 are joined by a disulfide. Residues 137 to 158 form a helical membrane-spanning segment; the sequence is MWTSSDVLCSSASILHLVAIAT. Residues 159–177 are Cytoplasmic-facing; it reads DRYWAVTDVDYIHIRNEKR. Residues 178 to 200 form a helical membrane-spanning segment; sequence IFTMIVLVWGAALVVSLAPQLGW. The Extracellular segment spans residues 201-228; sequence KDPDYLARITQQQKCLVSQDLAYQIFAT. The helical transmembrane segment at 229-250 threads the bilayer; sequence MSTFYVPLAVILILYWKIFQTA. Residues 251-386 are Cytoplasmic-facing; sequence RRRIRRRRDP…AKRERKAAKT (136 aa). 2 disordered regions span residues 255–282 and 339–360; these read RRRRDPPPPRPTSADGATPSGRPVQSAR and VPPSVSPEKSSSTVTNGSKPER. A compositionally biased stretch (low complexity) spans 339–353; it reads VPPSVSPEKSSSTVT. A helical transmembrane segment spans residues 387 to 410; sequence LAIITGAFVFCWLPFFIMALVMPI. Residues 411–419 are Extracellular-facing; the sequence is CQTCVISDY. A helical transmembrane segment spans residues 420–442; the sequence is LASFFLWLGYFNSTLNPVIYTIF. Residues 443 to 466 are Cytoplasmic-facing; it reads SPDFRQAFARILFGTHRRRRYKKF.

It belongs to the G-protein coupled receptor 1 family.

The protein resides in the cell membrane. Its function is as follows. This is a receptor for 5-hydroxytryptamine (serotonin), a biogenic hormone that function as a neurotransmitter, a hormone, and a mitogen. The polypeptide is 5-hydroxytryptamine receptor (Heliothis virescens (Tobacco budworm moth)).